Consider the following 124-residue polypeptide: Period circadian protein (124 aa).

A disordered region spans residues 30 to 124; that stretch reads TAPVELDPPK…TVTLTESLLN (95 aa). Over residues 71–96 the composition is skewed to low complexity; it reads SGNFTTGSNVRMSSVTNTSNAGTGTS. Gly residues predominate over residues 97–107; that stretch reads SAGGNGNGGSG.

Forms a heterodimer with timeless (TIM); the complex then translocates into the nucleus. In terms of processing, phosphorylated with a circadian rhythmicity, probably by the double-time protein (dbt). Phosphorylation could be implicated in the stability of per monomer and in the formation of heterodimer per-tim.

The protein localises to the nucleus. It localises to the cytoplasm. It is found in the perinuclear region. Essential for biological clock functions. Determines the period length of circadian and ultradian rhythms; an increase in PER dosage leads to shortened circadian rhythms and a decrease leads to lengthened circadian rhythms. Essential for the circadian rhythmicity of locomotor activity, eclosion behavior, and for the rhythmic component of the male courtship song that originates in the thoracic nervous system. The biological cycle depends on the rhythmic formation and nuclear localization of the TIM-PER complex. Light induces the degradation of TIM, which promotes elimination of PER. Nuclear activity of the heterodimer coordinatively regulates PER and TIM transcription through a negative feedback loop. Behaves as a negative element in circadian transcriptional loop. Does not appear to bind DNA, suggesting indirect transcriptional inhibition. The sequence is that of Period circadian protein (per) from Hirtodrosophila pictiventris (Fruit fly).